The sequence spans 908 residues: Metabotropic glutamate receptor 8 (908 aa).

The signal sequence occupies residues 1–33 (MVCEGKRSTSCPCFFLLTAKFYWILTMMQRTHS). Residues 34-583 (QEYAHSIRLD…IIKLEWHSPW (550 aa)) are Extracellular-facing. A disulfide bond links Cys64 and Cys106. A glycan (N-linked (GlcNAc...) asparagine) is linked at Asn95. L-glutamate-binding positions include Ser156, 177–179 (AST), and Tyr227. Intrachain disulfides connect Cys246-Cys534, Cys369-Cys384, Cys424-Cys431, Cys516-Cys535, Cys520-Cys538, Cys541-Cys553, and Cys556-Cys569. N-linked (GlcNAc...) asparagine glycosylation is present at Asn298. Asp309 is an L-glutamate binding site. L-glutamate is bound at residue Lys401. N-linked (GlcNAc...) asparagine glycosylation is found at Asn452 and Asn480. Asn565 carries N-linked (GlcNAc...) asparagine glycosylation. Residues 584 to 608 (AVVPVFIAILGIIATTFVIVTFVRY) traverse the membrane as a helical segment. The Cytoplasmic portion of the chain corresponds to 609-620 (NDTPIVRASGRE). Residues 621–641 (LSYVLLTGIFLCYSITFLMIA) traverse the membrane as a helical segment. Residues 642-647 (APDTII) lie on the Extracellular side of the membrane. The helical transmembrane segment at 648–668 (CSFRRIFLGLGMCFSYAALLT) threads the bilayer. Residues 669–695 (KTNRIHRIFEQGKKSVTAPKFISPASQ) lie on the Cytoplasmic side of the membrane. A helical transmembrane segment spans residues 696 to 716 (LVITFSLISVQLLGVFVWFVV). At 717–746 (DPPHTIIDYGEQRTLDPENARGVLKCDISD) the chain is on the extracellular side. A helical transmembrane segment spans residues 747–768 (LSLICSLGYSILLMVTCTVYAI). Topologically, residues 769–781 (KTRGVPETFNEAK) are cytoplasmic. The helical transmembrane segment at 782-803 (PIGFTMYTTCIIWLAFIPIFFG) threads the bilayer. The Extracellular segment spans residues 804 to 818 (TAQSAEKMYIQTTTL). The chain crosses the membrane as a helical span at residues 819 to 843 (TVSMSLSASVSLGMLYMPKVYIIIF). At 844–908 (HPEQNVQKRK…TYISYSNHSI (65 aa)) the chain is on the cytoplasmic side. Residue Lys882 forms a Glycyl lysine isopeptide (Lys-Gly) (interchain with G-Cter in SUMO1) linkage.

The protein belongs to the G-protein coupled receptor 3 family. Interacts with PICK1. In terms of tissue distribution, strongly expressed in olfactory bulb, accessory olfactory bulb, and mammillary body. Weaker expression in the retina, and in scattered cells in the cortex and hindbrain.

The protein localises to the cell membrane. In terms of biological role, G-protein coupled receptor for glutamate. Ligand binding causes a conformation change that triggers signaling via guanine nucleotide-binding proteins (G proteins) and modulates the activity of down-stream effectors. Signaling inhibits adenylate cyclase activity. The protein is Metabotropic glutamate receptor 8 (Grm8) of Mus musculus (Mouse).